The primary structure comprises 461 residues: Tumor necrosis factor receptor superfamily member 1A (461 aa).

The N-terminal stretch at 1–29 (MGLSTVPGLLLPLVLRALLVDVYPAGVHG) is a signal peptide. The Extracellular portion of the chain corresponds to 30–210 (LVLHPGDREK…RNDFQDTGTT (181 aa)). 4 TNFR-Cys repeats span residues 43 to 82 (LCPQ…TDCR), 83 to 125 (ECDN…DTVC), 126 to 166 (GCRK…DTIC), and 167 to 195 (NCHS…NLCP). 7 disulfide bridges follow: Cys44–Cys58, Cys59–Cys72, Cys62–Cys81, Cys84–Cys99, Cys102–Cys117, Cys105–Cys125, and Cys127–Cys143. A glycan (N-linked (GlcNAc...) asparagine) is linked at Asn54. The N-linked (GlcNAc...) asparagine glycan is linked to Asn86. Residues Asn145 and Asn151 are each glycosylated (N-linked (GlcNAc...) asparagine). Cystine bridges form between Cys146/Cys158, Cys149/Cys166, Cys168/Cys179, Cys182/Cys194, and Cys185/Cys190. A helical membrane pass occupies residues 211–233 (VLLPLVIFFGLCLAFFLFVGLAC). Residues 234 to 461 (RYQRWKPKLY…RLAPAPHLLR (228 aa)) are Cytoplasmic-facing. Positions 340–350 (LPKWGGSAHSA) are N-SMase activation domain (NSD). One can recognise a Death domain in the interval 362–447 (PATLYAVVDG…GCLEDIEEAL (86 aa)).

Binding of TNF to the extracellular domain leads to homotrimerization. The aggregated death domains provide a novel molecular interface that interacts specifically with the death domain of TRADD. Various TRADD-interacting proteins such as TRAFS, RIPK1 and possibly FADD, are recruited to the complex by their association with TRADD. This complex activates at least two distinct signaling cascades, apoptosis and NF-kappa-B signaling. Interacts with BAG4, BABAM2, FEM1B, GRB2, SQSTM1 and TRPC4AP. Interacts with DAB2IP. Interacts directly with NOL3 (via CARD domain); inhibits TNF-signaling pathway. Interacts with SH3RF2, TRADD and RIPK1. SH3RF2 facilitates the recruitment of RIPK1 and TRADD to TNFRSF1A in a TNF-alpha-dependent process. Interacts with PGLYRP1; this interaction is important for cell death induction. Interacts (via death domain) with MADD (via death domain).

The protein localises to the cell membrane. Its subcellular location is the golgi apparatus membrane. Functionally, receptor for TNFSF2/TNF-alpha and homotrimeric TNFSF1/lymphotoxin-alpha. The adapter molecule FADD recruits caspase-8 to the activated receptor. The resulting death-inducing signaling complex (DISC) performs caspase-8 proteolytic activation which initiates the subsequent cascade of caspases (aspartate-specific cysteine proteases) mediating apoptosis. The protein is Tumor necrosis factor receptor superfamily member 1A (TNFRSF1A) of Sus scrofa (Pig).